Consider the following 230-residue polypeptide: Phosphatidylserine decarboxylase proenzyme (230 aa).

The Schiff-base intermediate with substrate; via pyruvic acid role is filled by serine 186. Serine 186 is subject to Pyruvic acid (Ser); by autocatalysis.

This sequence belongs to the phosphatidylserine decarboxylase family. PSD-A subfamily. Heterodimer of a large membrane-associated beta subunit and a small pyruvoyl-containing alpha subunit. Requires pyruvate as cofactor. In terms of processing, is synthesized initially as an inactive proenzyme. Formation of the active enzyme involves a self-maturation process in which the active site pyruvoyl group is generated from an internal serine residue via an autocatalytic post-translational modification. Two non-identical subunits are generated from the proenzyme in this reaction, and the pyruvate is formed at the N-terminus of the alpha chain, which is derived from the carboxyl end of the proenzyme. The post-translation cleavage follows an unusual pathway, termed non-hydrolytic serinolysis, in which the side chain hydroxyl group of the serine supplies its oxygen atom to form the C-terminus of the beta chain, while the remainder of the serine residue undergoes an oxidative deamination to produce ammonia and the pyruvoyl prosthetic group on the alpha chain.

It localises to the cell membrane. The enzyme catalyses a 1,2-diacyl-sn-glycero-3-phospho-L-serine + H(+) = a 1,2-diacyl-sn-glycero-3-phosphoethanolamine + CO2. It participates in phospholipid metabolism; phosphatidylethanolamine biosynthesis; phosphatidylethanolamine from CDP-diacylglycerol: step 2/2. In terms of biological role, catalyzes the formation of phosphatidylethanolamine (PtdEtn) from phosphatidylserine (PtdSer). This is Phosphatidylserine decarboxylase proenzyme from Wolbachia pipientis wMel.